The following is a 399-amino-acid chain: Probable aspartate/prephenate aminotransferase (399 aa).

Residues glycine 39, tryptophan 125, and asparagine 175 each coordinate L-aspartate. The residue at position 239 (lysine 239) is an N6-(pyridoxal phosphate)lysine. Arginine 375 is an L-aspartate binding site.

It belongs to the class-I pyridoxal-phosphate-dependent aminotransferase family. In terms of assembly, homodimer. It depends on pyridoxal 5'-phosphate as a cofactor.

The protein localises to the cytoplasm. It catalyses the reaction L-aspartate + 2-oxoglutarate = oxaloacetate + L-glutamate. It carries out the reaction L-arogenate + 2-oxoglutarate = prephenate + L-glutamate. Functionally, catalyzes the reversible conversion of aspartate and 2-oxoglutarate to glutamate and oxaloacetate. Can also transaminate prephenate in the presence of glutamate. In Rickettsia prowazekii (strain Madrid E), this protein is Probable aspartate/prephenate aminotransferase (aatA).